The following is a 407-amino-acid chain: Serine/threonine transporter SstT (407 aa).

The next 9 membrane-spanning stretches (helical) occupy residues 12–32 (GNLI…GISS), 42–62 (LGIL…FILI), 81–101 (IIIL…LANF), 141–161 (ALSS…GIAL), 179–199 (VLKI…GLVA), 218–238 (ILLV…IVFF), 245–267 (FPLI…SSAA), 288–308 (ISIP…IAIL), and 330–350 (IIAT…LLLI).

Belongs to the dicarboxylate/amino acid:cation symporter (DAACS) (TC 2.A.23) family.

The protein localises to the cell inner membrane. It catalyses the reaction L-serine(in) + Na(+)(in) = L-serine(out) + Na(+)(out). It carries out the reaction L-threonine(in) + Na(+)(in) = L-threonine(out) + Na(+)(out). Involved in the import of serine and threonine into the cell, with the concomitant import of sodium (symport system). This Campylobacter jejuni subsp. jejuni serotype O:23/36 (strain 81-176) protein is Serine/threonine transporter SstT.